The following is a 212-amino-acid chain: Pyridoxine/pyridoxamine 5'-phosphate oxidase (212 aa).

Substrate-binding positions include Arg7–Tyr10 and Lys65. Residues Arg60–Lys65, Phe75–Thr76, Lys82, and Gln104 contribute to the FMN site. Residues Tyr122, Arg126, and Ser130 each contribute to the substrate site. FMN is bound by residues Gln139–Ser140 and Trp184. Arg190–His192 is a substrate binding site. Arg194 is an FMN binding site.

The protein belongs to the pyridoxamine 5'-phosphate oxidase family. In terms of assembly, homodimer. FMN is required as a cofactor.

It carries out the reaction pyridoxamine 5'-phosphate + O2 + H2O = pyridoxal 5'-phosphate + H2O2 + NH4(+). The enzyme catalyses pyridoxine 5'-phosphate + O2 = pyridoxal 5'-phosphate + H2O2. The protein operates within cofactor metabolism; pyridoxal 5'-phosphate salvage; pyridoxal 5'-phosphate from pyridoxamine 5'-phosphate: step 1/1. Its pathway is cofactor metabolism; pyridoxal 5'-phosphate salvage; pyridoxal 5'-phosphate from pyridoxine 5'-phosphate: step 1/1. Functionally, catalyzes the oxidation of either pyridoxine 5'-phosphate (PNP) or pyridoxamine 5'-phosphate (PMP) into pyridoxal 5'-phosphate (PLP). In Rippkaea orientalis (strain PCC 8801 / RF-1) (Cyanothece sp. (strain PCC 8801)), this protein is Pyridoxine/pyridoxamine 5'-phosphate oxidase.